We begin with the raw amino-acid sequence, 88 residues long: uncharacterized protein (88 aa).

The helical transmembrane segment at 34–54 threads the bilayer; sequence IIIAVILIFFLTIVGLFYLII.

The protein localises to the membrane. This is an uncharacterized protein from Ureaplasma parvum serovar 3 (strain ATCC 700970).